The following is a 238-amino-acid chain: Sugar fermentation stimulation protein homolog (238 aa).

It belongs to the SfsA family.

The sequence is that of Sugar fermentation stimulation protein homolog from Alkalilimnicola ehrlichii (strain ATCC BAA-1101 / DSM 17681 / MLHE-1).